The following is a 935-amino-acid chain: Isoleucine--tRNA ligase (935 aa).

A 'HIGH' region motif is present at residues Pro58–His68. Residue Glu558 participates in L-isoleucyl-5'-AMP binding. The 'KMSKS' region signature appears at Lys599 to Ser603. Lys602 is an ATP binding site. Zn(2+)-binding residues include Cys897, Cys900, Cys917, and Cys920.

This sequence belongs to the class-I aminoacyl-tRNA synthetase family. IleS type 1 subfamily. In terms of assembly, monomer. It depends on Zn(2+) as a cofactor.

Its subcellular location is the cytoplasm. It catalyses the reaction tRNA(Ile) + L-isoleucine + ATP = L-isoleucyl-tRNA(Ile) + AMP + diphosphate. Functionally, catalyzes the attachment of isoleucine to tRNA(Ile). As IleRS can inadvertently accommodate and process structurally similar amino acids such as valine, to avoid such errors it has two additional distinct tRNA(Ile)-dependent editing activities. One activity is designated as 'pretransfer' editing and involves the hydrolysis of activated Val-AMP. The other activity is designated 'posttransfer' editing and involves deacylation of mischarged Val-tRNA(Ile). This is Isoleucine--tRNA ligase from Francisella tularensis subsp. tularensis (strain WY96-3418).